The chain runs to 195 residues: 7-methyl-GTP pyrophosphatase (195 aa).

The Proton acceptor role is filled by Asp71.

Belongs to the Maf family. YceF subfamily. A divalent metal cation is required as a cofactor.

The protein resides in the cytoplasm. The catalysed reaction is N(7)-methyl-GTP + H2O = N(7)-methyl-GMP + diphosphate + H(+). Its function is as follows. Nucleoside triphosphate pyrophosphatase that hydrolyzes 7-methyl-GTP (m(7)GTP). May have a dual role in cell division arrest and in preventing the incorporation of modified nucleotides into cellular nucleic acids. This Shewanella oneidensis (strain ATCC 700550 / JCM 31522 / CIP 106686 / LMG 19005 / NCIMB 14063 / MR-1) protein is 7-methyl-GTP pyrophosphatase.